The sequence spans 457 residues: Multidrug resistance protein MdtK (457 aa).

A run of 12 helical transmembrane segments spans residues 11 to 31, 53 to 73, 93 to 113, 127 to 147, 160 to 180, 191 to 211, 243 to 263, 276 to 296, 316 to 336, 350 to 370, 387 to 407, and 418 to 438; these read LLAL…MGFV, IWLP…PVVA, WLAG…GYII, AVGY…FQVA, GMVM…IFIY, VGCG…MLWW, LPIA…ALLV, IALN…AAVT, RTGV…TVLM, VVLL…SDSI, IFFI…YLLA, and PAGF…MMML.

It belongs to the multi antimicrobial extrusion (MATE) (TC 2.A.66.1) family. MdtK subfamily.

It localises to the cell inner membrane. Its function is as follows. Multidrug efflux pump that functions probably as a Na(+)/drug antiporter. This is Multidrug resistance protein MdtK from Klebsiella pneumoniae (strain 342).